The chain runs to 176 residues: Small ribosomal subunit protein uS5 (176 aa).

Positions 11 to 74 (LSEVLVDVNR…QAAKKRMMKV (64 aa)) constitute an S5 DRBM domain.

Belongs to the universal ribosomal protein uS5 family. In terms of assembly, part of the 30S ribosomal subunit. Contacts proteins S4 and S8.

With S4 and S12 plays an important role in translational accuracy. Its function is as follows. Located at the back of the 30S subunit body where it stabilizes the conformation of the head with respect to the body. The sequence is that of Small ribosomal subunit protein uS5 from Rickettsia conorii (strain ATCC VR-613 / Malish 7).